Consider the following 549-residue polypeptide: Vacuolar fusion protein MON1 homolog A (549 aa).

Disordered regions lie at residues M1–S90 and E109–E137. The segment covering E110–L119 has biased composition (basic and acidic residues).

It belongs to the MON1/SAND family.

In terms of biological role, plays an important role in membrane trafficking through the secretory apparatus. Not involved in endocytic trafficking to lysosomes. The polypeptide is Vacuolar fusion protein MON1 homolog A (MON1A) (Gallus gallus (Chicken)).